A 238-amino-acid polypeptide reads, in one-letter code: Zinc import ATP-binding protein ZnuC (238 aa).

The ABC transporter domain maps to 5–220 (ITLKNIHVSF…LEFISIFGLK (216 aa)). 37–44 (GPNGAGKS) contributes to the ATP binding site.

It belongs to the ABC transporter superfamily. Zinc importer (TC 3.A.1.15.5) family. The complex is composed of two ATP-binding proteins (ZnuC), two transmembrane proteins (ZnuB) and a solute-binding protein (ZnuA).

Its subcellular location is the cell inner membrane. The catalysed reaction is Zn(2+)(out) + ATP(in) + H2O(in) = Zn(2+)(in) + ADP(in) + phosphate(in) + H(+)(in). Its function is as follows. Part of the ABC transporter complex ZnuABC involved in zinc import. Responsible for energy coupling to the transport system. This is Zinc import ATP-binding protein ZnuC from Buchnera aphidicola subsp. Schizaphis graminum (strain Sg).